The sequence spans 122 residues: Large ribosomal subunit protein bL12 (122 aa).

This sequence belongs to the bacterial ribosomal protein bL12 family. As to quaternary structure, homodimer. Part of the ribosomal stalk of the 50S ribosomal subunit. Forms a multimeric L10(L12)X complex, where L10 forms an elongated spine to which 2 to 4 L12 dimers bind in a sequential fashion. Binds GTP-bound translation factors.

In terms of biological role, forms part of the ribosomal stalk which helps the ribosome interact with GTP-bound translation factors. Is thus essential for accurate translation. The sequence is that of Large ribosomal subunit protein bL12 from Pasteurella multocida (strain Pm70).